The following is a 393-amino-acid chain: Lysophosphatidic acid receptor 1 (393 aa).

At 1–50 the chain is on the extracellular side; sequence MAAASTSSPVVSQPQFTAMNEPQCFYNESIAFFYNRSGKYLATEWNTVSK. Intrachain disulfides connect cysteine 24/cysteine 190 and cysteine 188/cysteine 195. N-linked (GlcNAc...) asparagine glycosylation is found at asparagine 27 and asparagine 35. Lysine 39 provides a ligand contact to a 1-acyl-sn-glycero-3-phosphate. Residues 51–75 form a helical membrane-spanning segment; the sequence is LVMGLGITVCIFIMLANLLVMVAIY. The Cytoplasmic segment spans residues 76-83; that stretch reads VNRRFHFP. Residues 84–107 traverse the membrane as a helical segment; that stretch reads IYYLMANLAAADFFAGLAYFYLMF. The Extracellular segment spans residues 108–121; sequence NTGPNTRRLTVSTW. A helical transmembrane segment spans residues 122 to 144; it reads LLRQGLIDTTVTASVANLLAIAI. 124 to 129 is a binding site for a 1-acyl-sn-glycero-3-phosphate; the sequence is RQGLID. Residues 145–163 are Cytoplasmic-facing; it reads ERHITVFRMQLHTRMSNRR. The chain crosses the membrane as a helical span at residues 164 to 184; it reads VVVVIVVIWTMAIVMGAIPSV. At 185–204 the chain is on the extracellular side; sequence GWNCICDIENCSNMAPLYSD. A helical membrane pass occupies residues 205 to 225; it reads SYLVFWAIFNLVTFVVMVVLY. Tryptophan 210 serves as a coordination point for a 1-acyl-sn-glycero-3-phosphate. Residues 226–255 are Cytoplasmic-facing; it reads AHIFGYVRQRTMRMSRHSSGPRRNRDTMMS. Residues 256–280 form a helical membrane-spanning segment; sequence LLKTVVIVLGAFIICWTPGLVLLLL. At 281-294 the chain is on the extracellular side; sequence DVCCPQCDVLAYEK. Cysteine 284 and cysteine 287 are oxidised to a cystine. The chain crosses the membrane as a helical span at residues 295 to 315; that stretch reads FFLLLAEFNSAMNPIIYSYRD. Topologically, residues 316 to 393 are cytoplasmic; the sequence is KEMSATFRQI…PPERPGQGRV (78 aa). At serine 341 the chain carries Phosphoserine. At threonine 351 the chain carries Phosphothreonine. Positions 369 to 381 are enriched in basic and acidic residues; that stretch reads KMRGGHHLLRDEQ. Residues 369 to 393 are disordered; the sequence is KMRGGHHLLRDEQPPPPERPGQGRV.

The protein belongs to the G-protein coupled receptor 1 family. As to quaternary structure, interacts with RALA and GRK2. Interacts with GNAQ and GNA13. Interacts with CD14; the interaction is enhanced by exposure to bacterial lipopolysaccharide (LPS). N-glycosylated. As to expression, detected in brain cortex and in pituitary pars tuberalis.

Its subcellular location is the cell surface. It localises to the cell membrane. The protein resides in the endosome. Its function is as follows. Receptor for lysophosphatidic acid (LPA). Plays a role in the reorganization of the actin cytoskeleton, cell migration, differentiation and proliferation, and thereby contributes to the responses to tissue damage and infectious agents. Activates downstream signaling cascades via the G(i)/G(o), G(12)/G(13), and G(q) families of heteromeric G proteins. Signaling inhibits adenylyl cyclase activity and decreases cellular cAMP levels. Signaling triggers an increase of cytoplasmic Ca(2+) levels. Activates RALA; this leads to the activation of phospholipase C (PLC) and the formation of inositol 1,4,5-trisphosphate. Signaling mediates activation of down-stream MAP kinases. Contributes to the regulation of cell shape. Promotes Rho-dependent reorganization of the actin cytoskeleton in neuronal cells and neurite retraction. Promotes the activation of Rho and the formation of actin stress fibers. Promotes formation of lamellipodia at the leading edge of migrating cells via activation of RAC1. Through its function as LPA receptor, plays a role in chemotaxis and cell migration, including responses to injury and wounding. Plays a role in triggering inflammation in response to bacterial lipopolysaccharide (LPS) via its interaction with CD14. Promotes cell proliferation in response to LPA. Inhibits the intracellular ciliogenesis pathway in response to LPA and through AKT1 activation. Required for normal skeleton development. May play a role in osteoblast differentiation. Required for normal brain development. Required for normal proliferation, survival and maturation of newly formed neurons in the adult dentate gyrus. Plays a role in pain perception and in the initiation of neuropathic pain. The chain is Lysophosphatidic acid receptor 1 (LPAR1) from Ovis aries (Sheep).